We begin with the raw amino-acid sequence, 88 residues long: UPF0297 protein SSU98_0066 (88 aa).

This sequence belongs to the UPF0297 family.

This chain is UPF0297 protein SSU98_0066, found in Streptococcus suis (strain 98HAH33).